The primary structure comprises 744 residues: Leucine-rich repeat extensin-like protein 1 (744 aa).

Residues 1–26 (MLFPPLRSLFLFTLLLSSVCFLQIKA) form the signal peptide. Asparagine 71 and asparagine 77 each carry an N-linked (GlcNAc...) asparagine glycan. LRR repeat units follow at residues 122–145 (LSDL…TFNR), 147–170 (KLLY…VLSL), 171–194 (PSLK…LFDR), 196–217 (LDAI…MGNS), 219–240 (VSAL…IGQM), 241–265 (GKTL…IGNL), 266–289 (KKVT…VGNM), 290–313 (KSLE…ICQL), and 315–336 (NLEN…CAAS). The N-linked (GlcNAc...) asparagine glycan is linked to asparagine 253. 2 N-linked (GlcNAc...) asparagine glycosylation sites follow: asparagine 318 and asparagine 344. One copy of the LRR 10 repeat lies at 381–404 (FSPPPPTFKMSPEVRTLPPPIYVY). The segment at 382 to 744 (SPPPPTFKMS…ASPPPPPSYY (363 aa)) is contains the Ser-Pro(4) repeats. 4 disordered regions span residues 408 to 445 (PPPP…PPPP), 518 to 537 (VYSS…PESS), 555 to 576 (PSPV…VYYP), and 658 to 744 (PPPS…PSYY). Residues 430-439 (SKMSPSVRAY) show a composition bias toward low complexity. The span at 704 to 729 (YEPPPEYSYSSSPPPPSPTSYFPPMP) shows a compositional bias: pro residues.

Post-translationally, hydroxylated on proline residues in the S-P-P-P-P repeat. O-glycosylated on hydroxyprolines. As to expression, expressed in root hair cells (at protein level).

It is found in the secreted. It localises to the cell wall. Its function is as follows. Modulates cell morphogenesis by regulating cell wall formation and assembly, and/or growth polarization. Together with LRX2, component of the extracellular mechanism regulating root hair morphogenesis and elongation. This is Leucine-rich repeat extensin-like protein 1 (LRX1) from Arabidopsis thaliana (Mouse-ear cress).